A 351-amino-acid polypeptide reads, in one-letter code: Transmembrane protein 184 homolog DDB_G0279555 (351 aa).

A helical membrane pass occupies residues 1–21 (MWIVAGVCSGVAILLSFYLIY). N26 carries an N-linked (GlcNAc...) asparagine glycan. 5 helical membrane-spanning segments follow: residues 39–59 (ILIM…FVEL), 73–93 (YVLY…FDLV), 127–147 (FVLQ…VLET), 162–182 (YVWL…FLVL), and 206–226 (ILFF…FGVI). N-linked (GlcNAc...) asparagine glycosylation occurs at N236. The chain crosses the membrane as a helical span at residues 241 to 261 (LQDFITCVEMVILAICHHFFF). N301 and N304 each carry an N-linked (GlcNAc...) asparagine glycan. Residues 327 to 351 (HNHPTTKKKDEESNLLEPEDKDIII) are disordered. Residues 339-351 (SNLLEPEDKDIII) are compositionally biased toward acidic residues.

Belongs to the TMEM184 family.

It is found in the cell membrane. Functionally, probable transporter. The protein is Transmembrane protein 184 homolog DDB_G0279555 (tmem184C) of Dictyostelium discoideum (Social amoeba).